Consider the following 209-residue polypeptide: Ribosomal RNA large subunit methyltransferase E (209 aa).

Glycine 63, tryptophan 65, aspartate 83, aspartate 99, and aspartate 124 together coordinate S-adenosyl-L-methionine. The active-site Proton acceptor is lysine 164.

This sequence belongs to the class I-like SAM-binding methyltransferase superfamily. RNA methyltransferase RlmE family.

It is found in the cytoplasm. It carries out the reaction uridine(2552) in 23S rRNA + S-adenosyl-L-methionine = 2'-O-methyluridine(2552) in 23S rRNA + S-adenosyl-L-homocysteine + H(+). Its function is as follows. Specifically methylates the uridine in position 2552 of 23S rRNA at the 2'-O position of the ribose in the fully assembled 50S ribosomal subunit. The chain is Ribosomal RNA large subunit methyltransferase E from Aliivibrio salmonicida (strain LFI1238) (Vibrio salmonicida (strain LFI1238)).